A 414-amino-acid chain; its full sequence is Serine/arginine-rich splicing factor SR45 (414 aa).

Disordered stretches follow at residues 1-95 (MAKP…KAVQ) and 175-414 (LPPR…PRKT). Composition is skewed to low complexity over residues 10 to 34 (SPSV…SRSI) and 42 to 60 (RSLS…GSRS). The Nuclear localization signal 1 signature appears at 62 to 69 (PRRGKSPA). Phosphoserine is present on S77. Residues 98-176 (LVLHVDSLSR…KVVKATFTLP (79 aa)) form the RRM domain. Low complexity predominate over residues 176 to 191 (PPRQKVSSPPKPVSAA). The span at 205 to 220 (DAEKDGGPRRPRETSP) shows a compositional bias: basic and acidic residues. A required for isoform 1 function in petal development region spans residues 218–219 (TS). A compositionally biased stretch (basic residues) spans 228 to 243 (PRRRSPLPRRGLSPRR). Residues 229–236 (RRRSPLPR) carry the Nuclear localization signal 2 motif. At S256 the chain carries Phosphoserine. Short sequence motifs (nuclear localization signal) lie at residues 284–291 (PRRYRSPP), 318–325 (PRRLRSPP), and 338–345 (IRRPGRSR). 2 stretches are compositionally biased toward basic residues: residues 285–343 (RRYR…RPGR) and 352–363 (RKGRGPAGRRGR). Over residues 364–373 (SSSYSSSPSP) the composition is skewed to low complexity. Positions 373 to 380 (PRRIPRKI) match the Nuclear localization signal 6 motif. Basic residues predominate over residues 375 to 394 (RIPRKISRSRSPKRPLRGKR). Residues 404 to 414 (SPPPPPPPRKT) show a composition bias toward pro residues.

It belongs to the splicing factor SR family. SR45 subfamily. In terms of assembly, component of the spliceosome. Interacts with AFC2, U2AF35A, U2AF35B, RNU1, SCL33 and SKIP. The interaction with AFC2 depends on phosphorylation status. Interaction with RNU1 defines initial 5' splice sites and interaction with U2AF35B 3' splice sites in the early stage of spliceosome assembly. In terms of processing, phosphorylated by AFC2. The phosphorylation status regulates intranuclear distribution. As to expression, especially present in actively growing regions and dividing cells. Mostly expressed in roots (primary and secondary root meristem), shoot apical meristem (SAM), leaf primordia, pollen and inflorescence, and, to a lower extent, in leaves, vascular tissue, hydathode and fruits.

It localises to the nucleus speckle. The protein resides in the nucleus. Its subcellular location is the nucleoplasm. Involved in 5' and 3' splicing site selection of introns, and may bridge the 5' and 3' components of the spliceosome. Isoform 1 is required during flower petal development and isoform 2 is involved in root growth. Negatively regulates glucose and abscisic acid (ABA) signaling during early seedling development. Involved in the RNA-directed DNA methylation pathway. Modulates KIN10 stability in response to sugars, probably through the splicing regulation of 5PTASE13, a protein implicated in the proteasomal degradation of KIN10. In Arabidopsis thaliana (Mouse-ear cress), this protein is Serine/arginine-rich splicing factor SR45.